The primary structure comprises 883 residues: Integrator complex subunit 6-A (883 aa).

The 225-residue stretch at 3-227 (ILLFLLDTSA…QCLESLVQKV (225 aa)) folds into the VWFA domain. Positions 626–633 (MMIDEADE) match the Inhibitory loop motif.

It belongs to the Integrator subunit 6 family. In terms of assembly, component of the Integrator complex, composed of core subunits INTS1, INTS2, INTS3, INTS4, INTS5, INTS6, INTS7, INTS8, INTS9/RC74, INTS10, INTS11/CPSF3L, INTS12, INTS13, INTS14 and INTS15. The core complex associates with protein phosphatase 2A subunits PPP2CA and PPP2R1A, to form the Integrator-PP2A (INTAC) complex.

It is found in the nucleus. Its subcellular location is the chromosome. In terms of biological role, component of the integrator complex, a multiprotein complex that terminates RNA polymerase II (Pol II) transcription in the promoter-proximal region of genes. The integrator complex provides a quality checkpoint during transcription elongation by driving premature transcription termination of transcripts that are unfavorably configured for transcriptional elongation: the complex terminates transcription by (1) catalyzing dephosphorylation of the C-terminal domain (CTD) of Pol II subunit POLR2A/RPB1 and SUPT5H/SPT5, (2) degrading the exiting nascent RNA transcript via endonuclease activity and (3) promoting the release of Pol II from bound DNA. The integrator complex is also involved in terminating the synthesis of non-coding Pol II transcripts, such as enhancer RNAs (eRNAs), small nuclear RNAs (snRNAs), telomerase RNAs and long non-coding RNAs (lncRNAs). Within the integrator complex, INTS6 acts as a molecular adapter that promotes assembly of protein phosphatase 2A (PP2A) subunits to the integrator core complex, promoting recruitment of PP2A to transcription pause-release checkpoint. The protein is Integrator complex subunit 6-A (ints6-a) of Xenopus laevis (African clawed frog).